The sequence spans 205 residues: Purine catabolism protein PucB (205 aa).

It functions in the pathway purine metabolism; hypoxanthine degradation. Its function is as follows. Required for xanthine dehydrogenase activity. Could be involved in formation of the molybdenum cofactor required by xanthine dehydrogenase. This Bacillus subtilis (strain 168) protein is Purine catabolism protein PucB (pucB).